The sequence spans 223 residues: Sigma non-opioid intracellular receptor 1 (223 aa).

The Lumenal portion of the chain corresponds to 1–9 (MPWAAGRRW). The segment at 2 to 8 (PWAAGRR) is targeting to endoplasmic reticulum-associated lipid droplets. Residues 10-30 (AWITLILTIIAVLIQAAWLWL) traverse the membrane as a helical segment. Residues 31 to 223 (GTQNFVFSRE…LTTYLFGQDS (193 aa)) are Cytoplasmic-facing. The interval 99–106 (SLSEYVLL) is important for ligand-binding. Positions 177-223 (VIPSTLFFALADTFFSTQDYLTLFYTLRAYARGLRLELTTYLFGQDS) are C-terminal hydrophobic region.

It belongs to the ERG2 family. As to quaternary structure, homotrimer. Interacts with KCNA4. Interacts with KCNA2; cocaine consumption leads to increased interaction. Forms a ternary complex with ANK2 and ITPR3. The complex is disrupted by agonists. Interacts with RNF112 in an oxidative stress-regulated manner. In terms of tissue distribution, widely expressed with higher expression in liver, brain, kidney and thymus. Expressed throughout the brain with higher expression within cerebral cortex, hippocampus and cerebellum. Within the hippocampus expressed in cornu ammonis pyramidal neurons, the granular cells of the dentate gyrus as well as interneurons. Within the cerebellum, expressed in Purkinje cell bodies. Highly expressed in the brainstem and motor neurons of the spinal cord. Expressed by neural retina, retinal pigment epithelial cells and lens.

Its subcellular location is the nucleus inner membrane. The protein resides in the nucleus outer membrane. It localises to the nucleus envelope. It is found in the cytoplasmic vesicle. The protein localises to the endoplasmic reticulum membrane. Its subcellular location is the membrane. The protein resides in the lipid droplet. It localises to the cell junction. It is found in the cell membrane. The protein localises to the cell projection. Its subcellular location is the growth cone. The protein resides in the postsynaptic density membrane. In terms of biological role, functions in lipid transport from the endoplasmic reticulum and is involved in a wide array of cellular functions probably through regulation of the biogenesis of lipid microdomains at the plasma membrane. Involved in the regulation of different receptors it plays a role in BDNF signaling and EGF signaling. Also regulates ion channels like the potassium channel and could modulate neurotransmitter release. Plays a role in calcium signaling through modulation together with ANK2 of the ITP3R-dependent calcium efflux at the endoplasmic reticulum. Plays a role in several other cell functions including proliferation, survival and death. Originally identified for its ability to bind various psychoactive drugs it is involved in learning processes, memory and mood alteration. Necessary for proper mitochondrial axonal transport in motor neurons, in particular the retrograde movement of mitochondria. Plays a role in protecting cells against oxidative stress-induced cell death via its interaction with RNF112. The chain is Sigma non-opioid intracellular receptor 1 (Sigmar1) from Mus musculus (Mouse).